Here is a 344-residue protein sequence, read N- to C-terminus: MIELQGLSQRFPGGSGEVHALRDVSLSIGAGEVFGIIGRSGAGKSTLVRAINLLNRPTSGRVIVGGQDLTALDNGALRLARRDIGMIFQHFNLLSSRTVFDNVALPLELAGKTKSEIEATVLPLLDLVGLSVLKDRYPSQISGGQKQRVGIARALASKPKVLLSDEATSALDPETTRSILDLLKQINRELGLTIVMITHQMEVIKQVCDRVAVLEAGRVVEEGRVIDVFLRPQHEVTRAMIGDVIAQELPESVLKRVESRLGNGRDHVYRLAFTGEGVDQPVLAQAIRRYGLDFNILHGHIDEIQGQAFGSLAIMATGELADVKAAMEYLQQQGVVVEEIEHVV.

Residues 2–241 (IELQGLSQRF…PQHEVTRAMI (240 aa)) form the ABC transporter domain. Position 38–45 (38–45 (GRSGAGKS)) interacts with ATP.

Belongs to the ABC transporter superfamily. Methionine importer (TC 3.A.1.24) family. As to quaternary structure, the complex is composed of two ATP-binding proteins (MetN), two transmembrane proteins (MetI) and a solute-binding protein (MetQ).

It is found in the cell inner membrane. The catalysed reaction is L-methionine(out) + ATP + H2O = L-methionine(in) + ADP + phosphate + H(+). The enzyme catalyses D-methionine(out) + ATP + H2O = D-methionine(in) + ADP + phosphate + H(+). Its function is as follows. Part of the ABC transporter complex MetNIQ involved in methionine import. Responsible for energy coupling to the transport system. This is Methionine import ATP-binding protein MetN from Cupriavidus pinatubonensis (strain JMP 134 / LMG 1197) (Cupriavidus necator (strain JMP 134)).